The chain runs to 661 residues: UvrABC system protein B (661 aa).

The Helicase ATP-binding domain maps to 25–182 (KGLNNKKRSQ…NDLVNLQYER (158 aa)). 38 to 45 (GITGSGKT) serves as a coordination point for ATP. Positions 91–114 (YYDYYQPEAYIPKTDVFIEKDSSI) match the Beta-hairpin motif. In terms of domain architecture, Helicase C-terminal spans 430 to 592 (QVEDLVGEIQ…IIPKTINRTI (163 aa)). One can recognise a UVR domain in the interval 621-656 (KAHIDKLRKEMLKAASNLEFEQAAKLRDQLKTLEEA).

It belongs to the UvrB family. In terms of assembly, forms a heterotetramer with UvrA during the search for lesions. Interacts with UvrC in an incision complex.

It localises to the cytoplasm. In terms of biological role, the UvrABC repair system catalyzes the recognition and processing of DNA lesions. A damage recognition complex composed of 2 UvrA and 2 UvrB subunits scans DNA for abnormalities. Upon binding of the UvrA(2)B(2) complex to a putative damaged site, the DNA wraps around one UvrB monomer. DNA wrap is dependent on ATP binding by UvrB and probably causes local melting of the DNA helix, facilitating insertion of UvrB beta-hairpin between the DNA strands. Then UvrB probes one DNA strand for the presence of a lesion. If a lesion is found the UvrA subunits dissociate and the UvrB-DNA preincision complex is formed. This complex is subsequently bound by UvrC and the second UvrB is released. If no lesion is found, the DNA wraps around the other UvrB subunit that will check the other stand for damage. In Rickettsia bellii (strain OSU 85-389), this protein is UvrABC system protein B.